Reading from the N-terminus, the 127-residue chain is Small ribosomal subunit protein uS12 (127 aa).

Residues 1–28 are disordered; that stretch reads MPTIQQLIRDERSKAKRKTKSPALKQCP. Asp89 is modified (3-methylthioaspartic acid). The segment at 104–127 is disordered; the sequence is ATGVKNRQKARSKYGTKRPKPAAK. Residues 109 to 127 show a composition bias toward basic residues; the sequence is NRQKARSKYGTKRPKPAAK.

This sequence belongs to the universal ribosomal protein uS12 family. As to quaternary structure, part of the 30S ribosomal subunit. Contacts proteins S8 and S17. May interact with IF1 in the 30S initiation complex.

In terms of biological role, with S4 and S5 plays an important role in translational accuracy. Functionally, interacts with and stabilizes bases of the 16S rRNA that are involved in tRNA selection in the A site and with the mRNA backbone. Located at the interface of the 30S and 50S subunits, it traverses the body of the 30S subunit contacting proteins on the other side and probably holding the rRNA structure together. The combined cluster of proteins S8, S12 and S17 appears to hold together the shoulder and platform of the 30S subunit. This is Small ribosomal subunit protein uS12 from Microcystis aeruginosa (strain NIES-843 / IAM M-2473).